The following is a 662-amino-acid chain: MKTFINWLKKPSISKKLIVSFIAILIIPILILEFSSYRSASGKLDQEIMGNAKNSVDTFNTTVTNDLGEKAKAVTFFSESLKRSAFKGKSNQEEIKAKFSQYVSINQGVARIYGGADNGTYVQAPKEKLPEGYDPRQRPWYQDAMKAGGEIVVTDPYVAASDGSMVITIAQELKDGSGVVAMDITIDKLLEQMKQIKVGKEGYAFIATKNKTYVAHKNHKAGEKLSGDWVAKMYANDSGELQYTLNNEDKKMTYTTNELTGWKIAGTMYMDEIKDASKSVLTTGMIVLIASIVAGGILILFIVRSITKPLKRLVQSSKTISRGDLTETIEIHSKDELGELGESFNEMGQSLRSLISAIQDSVNNVAASSEQLTASAGQTSKATEHITMAIEQFSNGNEEQSEKVESSSHQLNLMNEGLQQVSQTSSDITKASIQSTEIAGTGEKFVQQTVGQMNSINQSVQQAEAVVKGLEGKSKDITSILRVINGIADQTNLLALNAAIEAARAGESGRGFSVVAEEVRKLAVQSADSAKEIEKLIQEIVAEIDTSLHMFKEVNQEVQSGLVVTDNTKESFQSIFSMTNEIAGKLQTMNSTVEQLSDRSQHVSAAVSGIADVSKESSASIQDIAASAEEQLASMEEISSSATTLAQMAEELRDLTKQFKIE.

At 1–16 the chain is on the cytoplasmic side; the sequence is MKTFINWLKKPSISKK. Residues 17–37 traverse the membrane as a helical segment; the sequence is LIVSFIAILIIPILILEFSSY. The Extracellular segment spans residues 38 to 282; sequence RSASGKLDQE…IKDASKSVLT (245 aa). The Cache domain maps to 153 to 229; it reads VTDPYVAASD…KAGEKLSGDW (77 aa). Residues 283–303 traverse the membrane as a helical segment; sequence TGMIVLIASIVAGGILILFIV. The region spanning 304–356 is the HAMP domain; sequence RSITKPLKRLVQSSKTISRGDLTETIEIHSKDELGELGESFNEMGQSLRSLIS. Over 304-662 the chain is Cytoplasmic; that stretch reads RSITKPLKRL…RDLTKQFKIE (359 aa). Gln-371 and Gln-595 each carry glutamate methyl ester (Gln). A Methyl-accepting transducer domain is found at 375–611; that stretch reads SAGQTSKATE…HVSAAVSGIA (237 aa). Glutamate methyl ester (Glu) is present on residues Glu-630 and Glu-637.

The protein belongs to the methyl-accepting chemotaxis (MCP) protein family. In terms of assembly, interacts with FloT. Post-translationally, some glutamine residues are deamidated to glutamate by CheD and subsequently methylated. The demethylation is selective. Gln-371 is demethylated only upon asparagine addition whereas Glu-637 is demethylated only upon asparagine removal. Glu-630 appears indiscriminate and is demethylated upon both addition and removal of asparagine.

Its subcellular location is the cell membrane. The protein localises to the membrane raft. Functionally, chemotactic-signal transducers respond to changes in the concentration of attractants and repellents in the environment, transduce a signal from the outside to the inside of the cell, and facilitate sensory adaptation through the variation of the level of methylation. All amino acids serve as attractants in B.subtilis, they appear to cause an increase in the turnover methyl groups, leading to methylation of an unidentified acceptor, while repellents have been shown to cause a decrease in methyl group turnover. The methyl groups are added by a methyltransferase and removed by a methylesterase. McpB is required for taxis towards asparagine, aspartate, glutamine, and histidine. The protein is Methyl-accepting chemotaxis protein McpB (mcpB) of Bacillus subtilis (strain 168).